A 377-amino-acid polypeptide reads, in one-letter code: Gibberellin 20 oxidase 1 (377 aa).

Residues 222-322 (ENDSIMRLNY…RKSLAFFLCP (101 aa)) enclose the Fe2OG dioxygenase domain. 3 residues coordinate Fe cation: histidine 247, aspartate 249, and histidine 303. Arginine 313 is an active-site residue.

It belongs to the iron/ascorbate-dependent oxidoreductase family. GA20OX subfamily. It depends on Fe(2+) as a cofactor. L-ascorbate serves as cofactor. As to expression, highly expressed in stems and inflorescence tissues. Detected in seeds, roots, leaves and siliques.

The catalysed reaction is gibberellin A12 + 2 2-oxoglutarate + 3 O2 + H(+) = gibberellin A9 + 2 succinate + 3 CO2 + 2 H2O. It carries out the reaction gibberellin A12 + 2-oxoglutarate + O2 = gibberellin A15 + succinate + CO2. It catalyses the reaction gibberellin A15 + 2-oxoglutarate + O2 = gibberellin A24 + succinate + CO2 + H2O. The enzyme catalyses gibberellin A53 + 2-oxoglutarate + O2 = gibberellin A44 + succinate + CO2. The protein operates within plant hormone biosynthesis; gibberellin biosynthesis. Functionally, key oxidase enzyme in the biosynthesis of gibberellin that catalyzes the conversion of GA12 to GA9, via a three-step oxidation at C-20 of the GA skeleton. GA53 is less effectively oxidized than GA12 and is only oxidized one step to GA44. Involved in the promotion of the floral transition, fertility and silique elongation, but plays only a minor role in elongation of seedling organs. Acts redundantly with GA20OX2. The chain is Gibberellin 20 oxidase 1 (GA20OX1) from Arabidopsis thaliana (Mouse-ear cress).